A 461-amino-acid chain; its full sequence is Sensor histidine kinase MctS (461 aa).

The next 2 membrane-spanning stretches (helical) occupy residues I7 to T27 and F203 to L223. Position 259 is a phosphohistidine; by autocatalysis (H259). The Histidine kinase domain maps to L360–A450.

Its subcellular location is the cell membrane. It carries out the reaction ATP + protein L-histidine = ADP + protein N-phospho-L-histidine.. Functionally, member of the two-component regulatory system MctS/MctR, which activates mctP expression. The protein is Sensor histidine kinase MctS of Rhizobium johnstonii (strain DSM 114642 / LMG 32736 / 3841) (Rhizobium leguminosarum bv. viciae).